A 396-amino-acid polypeptide reads, in one-letter code: Phosphoglycerate kinase (396 aa).

Substrate contacts are provided by residues Asp-21–Asn-23, Arg-36, His-59–Lys-62, Arg-119, and Arg-156. ATP contacts are provided by residues Lys-206, Gly-294, Glu-325, and Gly-352–Ser-355.

Belongs to the phosphoglycerate kinase family. Monomer.

Its subcellular location is the cytoplasm. It catalyses the reaction (2R)-3-phosphoglycerate + ATP = (2R)-3-phospho-glyceroyl phosphate + ADP. It functions in the pathway carbohydrate degradation; glycolysis; pyruvate from D-glyceraldehyde 3-phosphate: step 2/5. The sequence is that of Phosphoglycerate kinase from Listeria monocytogenes serotype 4b (strain CLIP80459).